A 166-amino-acid polypeptide reads, in one-letter code: NADH-quinone oxidoreductase subunit I (166 aa).

4Fe-4S ferredoxin-type domains are found at residues 57 to 87 (LRRYPNGEERCIACKLCEAVCPALAITIESE) and 97 to 126 (TRYDIDMFKCINCGLCEESCPVDSIVVTPI). The [4Fe-4S] cluster site is built by C67, C70, C73, C77, C106, C109, C112, and C116.

It belongs to the complex I 23 kDa subunit family. As to quaternary structure, NDH-1 is composed of 14 different subunits. Subunits NuoA, H, J, K, L, M, N constitute the membrane sector of the complex. Requires [4Fe-4S] cluster as cofactor.

The protein localises to the cell inner membrane. The catalysed reaction is a quinone + NADH + 5 H(+)(in) = a quinol + NAD(+) + 4 H(+)(out). In terms of biological role, NDH-1 shuttles electrons from NADH, via FMN and iron-sulfur (Fe-S) centers, to quinones in the respiratory chain. The immediate electron acceptor for the enzyme in this species is believed to be ubiquinone. Couples the redox reaction to proton translocation (for every two electrons transferred, four hydrogen ions are translocated across the cytoplasmic membrane), and thus conserves the redox energy in a proton gradient. The protein is NADH-quinone oxidoreductase subunit I of Legionella pneumophila (strain Paris).